A 166-amino-acid chain; its full sequence is Probable histone deacetylase complex subunit SAP18 (166 aa).

The tract at residues 143 to 166 (GRRFNNREQGDRFDHRQRQRSPIR) is disordered. Positions 147–158 (NNREQGDRFDHR) are enriched in basic and acidic residues.

Belongs to the SAP18 family. Interacts with SIN3 and histone deacetylase.

Acts in transcription repression. Involved in the tethering of the SIN3 complex to core histone proteins. The protein is Probable histone deacetylase complex subunit SAP18 of Caenorhabditis elegans.